The sequence spans 149 residues: MKIINVKIIDNRIYKHFYLPKYATSGSAGLDLSACLDKPLTIYPGKTHLISTGIAIHISDTKIAGVILPRSGLGHKYGIVLGNLVGLIDSDYQGELIVSLWNRGPKKYIVYPGKRIAQLVFMPIIQVRFSIVKSFIPTERGPHGFGHSM.

Substrate is bound by residues 70-72 (RSG), Asn83, and 87-89 (LID).

Belongs to the dUTPase family. It depends on Mg(2+) as a cofactor.

It carries out the reaction dUTP + H2O = dUMP + diphosphate + H(+). It participates in pyrimidine metabolism; dUMP biosynthesis; dUMP from dCTP (dUTP route): step 2/2. Functionally, this enzyme is involved in nucleotide metabolism: it produces dUMP, the immediate precursor of thymidine nucleotides and it decreases the intracellular concentration of dUTP so that uracil cannot be incorporated into DNA. The protein is Deoxyuridine 5'-triphosphate nucleotidohydrolase of Blochmanniella pennsylvanica (strain BPEN).